We begin with the raw amino-acid sequence, 152 residues long: MVKAVAVLGSSDGVKGTIFFTQEGDGPTAVTGSVSGLKPGLHGFHVHALGDTTNGCMSTGPHYNPASKEHGAPEDENRHAGDLGNVTAGADGVANINVTDSQIPLTGPNSIIGRAVVVHADPDDLGKGGHELSKSTGNAGGRVACGIIGLQG.

Residues H45, H47, and H62 each coordinate Cu cation. C56 and C145 are joined by a disulfide. Residues H62, H70, H79, and D82 each coordinate Zn(2+). Residue H119 participates in Cu cation binding.

It belongs to the Cu-Zn superoxide dismutase family. As to quaternary structure, homodimer. It depends on Cu cation as a cofactor. Zn(2+) is required as a cofactor.

Its subcellular location is the cytoplasm. The enzyme catalyses 2 superoxide + 2 H(+) = H2O2 + O2. Its function is as follows. Destroys radicals which are normally produced within the cells and which are toxic to biological systems. The polypeptide is Superoxide dismutase [Cu-Zn] 4AP (SODCC.2) (Zea mays (Maize)).